The primary structure comprises 152 residues: UPF0266 membrane protein plu2700 (152 aa).

The next 3 helical transmembrane spans lie at 6 to 26, 45 to 65, and 67 to 87; these read IALTGLIVLMLAFAVYDEFVV, IDALIFIILILIVVYNNITVY, and SRLTTYLLLFTILVTIYIAYI.

Belongs to the UPF0266 family.

The protein localises to the cell inner membrane. The polypeptide is UPF0266 membrane protein plu2700 (Photorhabdus laumondii subsp. laumondii (strain DSM 15139 / CIP 105565 / TT01) (Photorhabdus luminescens subsp. laumondii)).